The chain runs to 1017 residues: GPI ethanolamine phosphate transferase 3 (1017 aa).

A helical membrane pass occupies residues 34–54 (FYIILLVFIAILQFISIAFFT). N-linked (GlcNAc...) asparagine glycosylation is found at Asn66, Asn71, Asn100, Asn182, and Asn203. Residues 347-367 (VSSLALLMGQPIPFNNLGWPI) traverse the membrane as a helical segment. An N-linked (GlcNAc...) asparagine glycan is attached at Asn411. A run of 6 helical transmembrane segments spans residues 457 to 477 (LLAT…SIVV), 484 to 504 (FVPG…GIFY), 515 to 535 (FWGT…ITIF), 558 to 578 (IAVM…FTIW), 582 to 602 (IVAF…VFLP), and 644 to 664 (LGGY…MITI). Asn681 and Asn682 each carry an N-linked (GlcNAc...) asparagine glycan. A helical membrane pass occupies residues 685-705 (WWVLGLCFLMIFILPACITGY). An N-linked (GlcNAc...) asparagine glycan is attached at Asn707. Residues 715–735 (AAPIWINVFLKGILGLNFVYW) traverse the membrane as a helical segment. Asn742 is a glycosylation site (N-linked (GlcNAc...) asparagine). Transmembrane regions (helical) follow at residues 765–785 (IIAG…PLCI), 806–826 (NIYG…ILLF), 829–849 (PLAQ…LEII), 903–923 (IAII…VALL), 947–967 (GILL…VTHF), and 981–1001 (FIFA…GTIA).

The protein belongs to the PIGG/PIGN/PIGO family. PIGO subfamily. Post-translationally, glycosylated.

It is found in the endoplasmic reticulum membrane. It participates in glycolipid biosynthesis; glycosylphosphatidylinositol-anchor biosynthesis. Involved in glycosylphosphatidylinositol-anchor biosynthesis. Transfers ethanolamine phosphate to the GPI third mannose which links the GPI-anchor to the C-terminus of the proteins by an amide bond. Involved in cell wall biosynthesis. The protein is GPI ethanolamine phosphate transferase 3 (GPI13) of Saccharomyces cerevisiae (strain ATCC 204508 / S288c) (Baker's yeast).